The following is a 74-amino-acid chain: Conotoxin ArMKLT2-041 (74 aa).

The signal sequence occupies residues 1-22; the sequence is MKLTCVLIVAVLFLTACQLIAA. A propeptide spanning residues 23-46 is cleaved from the precursor; the sequence is DDSRDLQKFPRRKMRDGMLNTKNT. The residue at position 49 (Gln-49) is a Pyrrolidone carboxylic acid. 3 cysteine pairs are disulfide-bonded: Cys-50-Cys-65, Cys-57-Cys-68, and Cys-64-Cys-73.

It belongs to the conotoxin O1 superfamily. As to expression, expressed by the venom duct.

Its subcellular location is the secreted. The sequence is that of Conotoxin ArMKLT2-041 from Conus arenatus (Sand-dusted cone).